A 365-amino-acid chain; its full sequence is Aspartate-semialdehyde dehydrogenase (365 aa).

NADP(+) contacts are provided by Thr15, Gly16, Thr17, Val18, Ser40, Ser43, Leu89, and Asp90. Cys156 functions as the Acyl-thioester intermediate in the catalytic mechanism. Position 188 (Gly188) interacts with NADP(+). His255 serves as the catalytic Proton acceptor. Asn342 is an NADP(+) binding site.

This sequence belongs to the aspartate-semialdehyde dehydrogenase family. As to quaternary structure, homotetramer; dimer of dimers.

It localises to the cytoplasm. The protein localises to the cytosol. It is found in the nucleus. The enzyme catalyses L-aspartate 4-semialdehyde + phosphate + NADP(+) = 4-phospho-L-aspartate + NADPH + H(+). It participates in amino-acid biosynthesis; L-methionine biosynthesis via de novo pathway; L-homoserine from L-aspartate: step 2/3. It functions in the pathway amino-acid biosynthesis; L-threonine biosynthesis; L-threonine from L-aspartate: step 2/5. Inhibited by the competitive inhibitor 1,4-benzoquinone and derivates such as 2-chloro-3-methoxy-1,4-naphthoquinone, 2,3-dichloro-1,4-naphthoquinone, 2-chloro-1,4-naphthoquinone, 2-bromo-1,4-naphthoquinone and 2,3-dichloro-5,8-dihydroxy-1,4-naphthoquinone. Its function is as follows. Catalyzes the NADPH-dependent formation of L-aspartate 4-semialdehyde (L-ASA) by the reductive dephosphorylation of 4-phospho-L-aspartate. Mediates the second step in the biosynthesis of amino acids that derive from aspartate (the aspartate family of amino acids), including methioinine and threonine, the latter of which is a precursor to isoleucine. This chain is Aspartate-semialdehyde dehydrogenase, found in Cryptococcus neoformans var. neoformans serotype D (strain JEC21 / ATCC MYA-565) (Filobasidiella neoformans).